A 516-amino-acid polypeptide reads, in one-letter code: Phosphatidylserine decarboxylase proenzyme 2, mitochondrial (516 aa).

A mitochondrion-targeting transit peptide spans 1–21; sequence MRPRQRFRRFHPRWSKVNLRG. The Mitochondrial matrix portion of the chain corresponds to 22–33; the sequence is FGGVGALKGVKA. Residues 34-52 traverse the membrane as a helical segment; it reads LNGMNVRVSMRLKWISNRI. Topologically, residues 53–516 are mitochondrial intermembrane; the sequence is HRIRRSRRLG…GQYVRVGEAL (464 aa). Catalysis depends on charge relay system; for autoendoproteolytic cleavage activity residues Asp-159, His-373, and Ser-488. The active-site Schiff-base intermediate with substrate; via pyruvic acid; for decarboxylase activity is the Ser-488. A Pyruvic acid (Ser); by autocatalysis modification is found at Ser-488.

This sequence belongs to the phosphatidylserine decarboxylase family. PSD-B subfamily. Eukaryotic type I sub-subfamily. In terms of assembly, heterodimer of a large membrane-associated beta subunit and a small pyruvoyl-containing alpha subunit. It depends on pyruvate as a cofactor. Is synthesized initially as an inactive proenzyme. Formation of the active enzyme involves a self-maturation process in which the active site pyruvoyl group is generated from an internal serine residue via an autocatalytic post-translational modification. Two non-identical subunits are generated from the proenzyme in this reaction, and the pyruvate is formed at the N-terminus of the alpha chain, which is derived from the carboxyl end of the proenzyme. The autoendoproteolytic cleavage occurs by a canonical serine protease mechanism, in which the side chain hydroxyl group of the serine supplies its oxygen atom to form the C-terminus of the beta chain, while the remainder of the serine residue undergoes an oxidative deamination to produce ammonia and the pyruvoyl prosthetic group on the alpha chain. During this reaction, the Ser that is part of the protease active site of the proenzyme becomes the pyruvoyl prosthetic group, which constitutes an essential element of the active site of the mature decarboxylase.

The protein localises to the mitochondrion. The protein resides in the mitochondrion inner membrane. It is found in the nucleus envelope. Its subcellular location is the lipid droplet. It localises to the endoplasmic reticulum membrane. The catalysed reaction is a 1,2-diacyl-sn-glycero-3-phospho-L-serine + H(+) = a 1,2-diacyl-sn-glycero-3-phosphoethanolamine + CO2. It participates in phospholipid metabolism; phosphatidylethanolamine biosynthesis; phosphatidylethanolamine from CDP-diacylglycerol: step 2/2. Catalyzes the formation of phosphatidylethanolamine (PtdEtn) from phosphatidylserine (PtdSer). Plays a central role in phospholipid metabolism and in the interorganelle trafficking of phosphatidylserine. Together with psd1 and psd3, responsible for the majority of phosphatidylethanolamine synthesis. Plays a role in lipid droplet biogenesis at the endoplasmic reticulum membrane. The chain is Phosphatidylserine decarboxylase proenzyme 2, mitochondrial from Schizosaccharomyces pombe (strain 972 / ATCC 24843) (Fission yeast).